The sequence spans 276 residues: Large ribosomal subunit protein uL2 (276 aa).

Disordered regions lie at residues 35-58 (RKLS…GGGH) and 218-276 (RPIT…KNRK). Residues 255 to 276 (RRPKKASNKMIVRRRPNGKNRK) are compositionally biased toward basic residues.

The protein belongs to the universal ribosomal protein uL2 family. As to quaternary structure, part of the 50S ribosomal subunit. Forms a bridge to the 30S subunit in the 70S ribosome.

One of the primary rRNA binding proteins. Required for association of the 30S and 50S subunits to form the 70S ribosome, for tRNA binding and peptide bond formation. It has been suggested to have peptidyltransferase activity; this is somewhat controversial. Makes several contacts with the 16S rRNA in the 70S ribosome. The chain is Large ribosomal subunit protein uL2 from Bifidobacterium adolescentis (strain ATCC 15703 / DSM 20083 / NCTC 11814 / E194a).